The sequence spans 163 residues: Nucleotide-binding protein KPN78578_03700 (163 aa).

Belongs to the YajQ family.

Functionally, nucleotide-binding protein. In Klebsiella pneumoniae subsp. pneumoniae (strain ATCC 700721 / MGH 78578), this protein is Nucleotide-binding protein KPN78578_03700.